Here is a 354-residue protein sequence, read N- to C-terminus: Type II restriction enzyme BanI (354 aa).

Homodimer.

The enzyme catalyses Endonucleolytic cleavage of DNA to give specific double-stranded fragments with terminal 5'-phosphates.. Its function is as follows. A P subtype restriction enzyme that recognizes the double-stranded sequence 5'-GGYRCC-3' and cleaves after G-1. In Aneurinibacillus aneurinilyticus (Bacillus aneurinolyticus), this protein is Type II restriction enzyme BanI (banIR).